The following is a 217-amino-acid chain: 2-C-methyl-D-erythritol 4-phosphate cytidylyltransferase (217 aa).

Belongs to the IspD/TarI cytidylyltransferase family. IspD subfamily.

The enzyme catalyses 2-C-methyl-D-erythritol 4-phosphate + CTP + H(+) = 4-CDP-2-C-methyl-D-erythritol + diphosphate. The protein operates within isoprenoid biosynthesis; isopentenyl diphosphate biosynthesis via DXP pathway; isopentenyl diphosphate from 1-deoxy-D-xylulose 5-phosphate: step 2/6. Its function is as follows. Catalyzes the formation of 4-diphosphocytidyl-2-C-methyl-D-erythritol from CTP and 2-C-methyl-D-erythritol 4-phosphate (MEP). This Chlamydia abortus (strain DSM 27085 / S26/3) (Chlamydophila abortus) protein is 2-C-methyl-D-erythritol 4-phosphate cytidylyltransferase.